Here is a 365-residue protein sequence, read N- to C-terminus: Flagellin 1 (365 aa).

It belongs to the bacterial flagellin family.

Its subcellular location is the secreted. It localises to the bacterial flagellum. In terms of biological role, flagellin is the subunit protein which polymerizes to form the filaments of bacterial flagella. The polypeptide is Flagellin 1 (fliC1) (Proteus mirabilis).